A 562-amino-acid chain; its full sequence is NAD-dependent malic enzyme (562 aa).

The active-site Proton donor is the Tyr101. An NAD(+)-binding site is contributed by Arg154. Residue Lys172 is the Proton acceptor of the active site. Residues Glu243, Asp244, and Asp267 each contribute to the a divalent metal cation site. Residues Asp267 and Asn415 each coordinate NAD(+).

It belongs to the malic enzymes family. As to quaternary structure, homotetramer. Mg(2+) is required as a cofactor. Requires Mn(2+) as cofactor.

The enzyme catalyses (S)-malate + NAD(+) = pyruvate + CO2 + NADH. It catalyses the reaction oxaloacetate + H(+) = pyruvate + CO2. The polypeptide is NAD-dependent malic enzyme (Shewanella piezotolerans (strain WP3 / JCM 13877)).